Here is a 199-residue protein sequence, read N- to C-terminus: Superoxide dismutase [Mn] (199 aa).

Residues histidine 27, histidine 76, aspartate 160, and histidine 164 each contribute to the Mn(2+) site.

Belongs to the iron/manganese superoxide dismutase family. It depends on Mn(2+) as a cofactor.

The enzyme catalyses 2 superoxide + 2 H(+) = H2O2 + O2. Its function is as follows. Destroys superoxide anion radicals which are normally produced within the cells and which are toxic to biological systems. The chain is Superoxide dismutase [Mn] (sodA) from Corynebacterium diphtheriae (strain ATCC 700971 / NCTC 13129 / Biotype gravis).